We begin with the raw amino-acid sequence, 57 residues long: Protein Ric1 (57 aa).

A run of 2 helical transmembrane segments spans residues Ile8–Cys28 and Ile34–Leu54.

The protein belongs to the UPF0057 (PMP3) family.

The protein localises to the membrane. This Phytophthora infestans (Potato late blight agent) protein is Protein Ric1 (RIC1).